A 381-amino-acid polypeptide reads, in one-letter code: Arrestin-C (381 aa).

It belongs to the arrestin family. In terms of assembly, homodimer; disulfide-linked in response to retinal illumination. Interacts with CXCR4; the interaction is dependent on the C-terminal phosphorylation of CXCR4 and modulates the calcium ion mobilization activity of CXCR4. Interacts with GPR84. As to expression, inner and outer segments, and the inner plexiform regions of the retina.

Its subcellular location is the photoreceptor inner segment. It localises to the cell projection. It is found in the cilium. The protein resides in the photoreceptor outer segment. Its function is as follows. May play a role in an as yet undefined retina-specific signal transduction. Could bind to photoactivated-phosphorylated red/green opsins. The chain is Arrestin-C (Arr3) from Mus musculus (Mouse).